The primary structure comprises 760 residues: UDP-N-acetylmuramoyl-L-alanyl-D-glutamate--2,6-diaminopimelate ligase MurE homolog, chloroplastic (760 aa).

The N-terminal 59 residues, 1 to 59 (MATAPLAFRLPFPFSFPSASRPPPSRILAPPTPRRLPLRLAAAAARRFRPPTADDEPPE), are a transit peptide targeting the chloroplast. Disordered stretches follow at residues 13–159 (PFSF…TDEL) and 176–205 (LSVV…DEDG). Over residues 20–34 (SRPPPSRILAPPTPR) the composition is skewed to pro residues. Acidic residues predominate over residues 53-62 (ADDEPPEAAE). The segment covering 118 to 132 (EIDRAIAEKREEFTR) has biased composition (basic and acidic residues). Acidic residues-rich tracts occupy residues 150 to 159 (PEDEDLTDEL) and 182 to 205 (ADEE…DEDG).

Belongs to the MurCDEF family. MurE subfamily. As to quaternary structure, component of the plastid-encoded plastid RNA polymerase (PEP) complex.

Its subcellular location is the plastid. It localises to the chloroplast. Its function is as follows. Required for the activity of the plastid-encoded RNA polymerase (PEP) and full expression of genes transcribed by PEP. Required for the proper build-up and formation of the PEP-complex. The polypeptide is UDP-N-acetylmuramoyl-L-alanyl-D-glutamate--2,6-diaminopimelate ligase MurE homolog, chloroplastic (Zea mays (Maize)).